Reading from the N-terminus, the 385-residue chain is GTPase Obg (385 aa).

Residues 1–159 (MHFIDQAEIE…RRLRLELKLI (159 aa)) enclose the Obg domain. Residues 160 to 328 (AEVGIVGMPN…LLQRVWQCLG (169 aa)) enclose the OBG-type G domain. Residues 166-173 (GMPNAGKS), 191-195 (FTTLQ), 213-216 (DIPG), 280-283 (NKID), and 309-311 (SAV) each bind GTP. Mg(2+) contacts are provided by serine 173 and threonine 193.

The protein belongs to the TRAFAC class OBG-HflX-like GTPase superfamily. OBG GTPase family. As to quaternary structure, monomer. Requires Mg(2+) as cofactor.

The protein resides in the cytoplasm. An essential GTPase which binds GTP, GDP and possibly (p)ppGpp with moderate affinity, with high nucleotide exchange rates and a fairly low GTP hydrolysis rate. Plays a role in control of the cell cycle, stress response, ribosome biogenesis and in those bacteria that undergo differentiation, in morphogenesis control. The sequence is that of GTPase Obg from Synechococcus sp. (strain JA-3-3Ab) (Cyanobacteria bacterium Yellowstone A-Prime).